A 365-amino-acid chain; its full sequence is Histidinol-phosphate aminotransferase (365 aa).

Lys-223 carries the N6-(pyridoxal phosphate)lysine modification.

The protein belongs to the class-II pyridoxal-phosphate-dependent aminotransferase family. Histidinol-phosphate aminotransferase subfamily. Homodimer. Requires pyridoxal 5'-phosphate as cofactor.

It catalyses the reaction L-histidinol phosphate + 2-oxoglutarate = 3-(imidazol-4-yl)-2-oxopropyl phosphate + L-glutamate. It functions in the pathway amino-acid biosynthesis; L-histidine biosynthesis; L-histidine from 5-phospho-alpha-D-ribose 1-diphosphate: step 7/9. This chain is Histidinol-phosphate aminotransferase, found in Bacillus pumilus (strain SAFR-032).